The chain runs to 445 residues: UDP-N-acetylmuramate--L-alanine ligase (445 aa).

113–119 lines the ATP pocket; it reads GSHGKTS.

This sequence belongs to the MurCDEF family.

The protein localises to the cytoplasm. It catalyses the reaction UDP-N-acetyl-alpha-D-muramate + L-alanine + ATP = UDP-N-acetyl-alpha-D-muramoyl-L-alanine + ADP + phosphate + H(+). Its pathway is cell wall biogenesis; peptidoglycan biosynthesis. In terms of biological role, cell wall formation. This Enterococcus faecalis (strain ATCC 700802 / V583) protein is UDP-N-acetylmuramate--L-alanine ligase.